A 176-amino-acid polypeptide reads, in one-letter code: Peptide deformylase 2 (176 aa).

Fe cation is bound by residues C99 and H141. E142 is a catalytic residue. H145 contacts Fe cation.

The protein belongs to the polypeptide deformylase family. The cofactor is Fe(2+).

It catalyses the reaction N-terminal N-formyl-L-methionyl-[peptide] + H2O = N-terminal L-methionyl-[peptide] + formate. Its function is as follows. Removes the formyl group from the N-terminal Met of newly synthesized proteins. Requires at least a dipeptide for an efficient rate of reaction. N-terminal L-methionine is a prerequisite for activity but the enzyme has broad specificity at other positions. The chain is Peptide deformylase 2 from Bordetella bronchiseptica (strain ATCC BAA-588 / NCTC 13252 / RB50) (Alcaligenes bronchisepticus).